A 298-amino-acid chain; its full sequence is Elongation factor Ts (298 aa).

The tract at residues 79 to 82 (TDFV) is involved in Mg(2+) ion dislocation from EF-Tu.

Belongs to the EF-Ts family.

It is found in the cytoplasm. In terms of biological role, associates with the EF-Tu.GDP complex and induces the exchange of GDP to GTP. It remains bound to the aminoacyl-tRNA.EF-Tu.GTP complex up to the GTP hydrolysis stage on the ribosome. In Mycoplasma genitalium (strain ATCC 33530 / DSM 19775 / NCTC 10195 / G37) (Mycoplasmoides genitalium), this protein is Elongation factor Ts (tsf).